Reading from the N-terminus, the 469-residue chain is Diacetylchitobiose binding protein NgcE (469 aa).

The segment at residues 1 to 37 (MTIRAGSLDRRTLLRGAIATAAMGSFAVACSSPSSED) is a signal peptide (tat-type signal). The disordered stretch occupies residues 30–54 (CSSPSSEDKESDSGPKGEKSANNPF). Positions 35 to 48 (SEDKESDSGPKGEK) are enriched in basic and acidic residues.

This sequence belongs to the bacterial solute-binding protein 1 family. In terms of assembly, the complex is composed of two ATP-binding proteins (MsiK), two transmembrane proteins (NgcF and NgcG) and a solute-binding protein (NgcE). Predicted to be exported by the Tat system. The position of the signal peptide cleavage has not been experimentally proven.

The protein resides in the cell membrane. In terms of biological role, part of the ABC transporter complex NgcEFG-MsiK involved in N,N'-diacetylchitobiose ((GlcNAc)2) uptake. Binds (GlcNAc)2. Can also bind GlcNAc. The chain is Diacetylchitobiose binding protein NgcE from Streptomyces coelicolor (strain ATCC BAA-471 / A3(2) / M145).